The sequence spans 664 residues: MSELLLELFSEEIPAFMQKNAEEGYLNIFTKIFEENEIFAKVQAFAGPRRITLYATHLPKVTLPKETEIKGPSIDAPEAAINGFCKAHNVSKLELSTKLINNQLYYFFVKKTEEREIKEILPEIIIEAINKYSWAKSMFWGDYKIKWIRPLRNILCIFDGEVLPLQFGHLTANNIAYGHRYRLTDNKKLEVTDFEDYKNKLSENHVILERTKREEIIKTGLLELANSRNLNIKEDNRLIEEVAGLSEFPVVLLGKIPQKFLELPKEVLISSMRTHQKYFCLFDKEGNFAQYFLFVSNGRFANAELVIKGNEKVLSARLSDALYFYKQDIAKTLESRLGKLEAVTFHAKLGNLREKVERVAKICSYTALDNTDLITAAKLCKSDLVSEMVGEFPDLQGIMGYYYAKHEGLGEEVAAAIKDHYKPQGLSDNVPGGNAALLALADKVDSLVGLMIAGEAPTGSGDPYALRRQALGIIRIILENKLELNLNDLIIFSLKLYGNSADKDLITSFFEERAKFYFKNDYDIALINAALDLNLVDTKFKLDSLKEFLVEDAGKQLLNAYKRASNIIDGQKITGLVDASLFSTQPEKELFEVMQKISPQVTSSISDKDYNKALNLLSFLLTPITSFFDNVLVNDPDPKIAENRLSLLHNICELFDKVAKFCRL.

The protein belongs to the class-II aminoacyl-tRNA synthetase family. Tetramer of two alpha and two beta subunits.

The protein localises to the cytoplasm. The catalysed reaction is tRNA(Gly) + glycine + ATP = glycyl-tRNA(Gly) + AMP + diphosphate. The protein is Glycine--tRNA ligase beta subunit of Rickettsia felis (strain ATCC VR-1525 / URRWXCal2) (Rickettsia azadi).